Consider the following 425-residue polypeptide: Glutamyl-tRNA reductase (425 aa).

Residues 49–52 (TCNR), S107, 112–114 (EPQ), and Q118 contribute to the substrate site. Residue C50 is the Nucleophile of the active site. NADP(+) is bound at residue 187–192 (GAGETI).

The protein belongs to the glutamyl-tRNA reductase family. In terms of assembly, homodimer.

It catalyses the reaction (S)-4-amino-5-oxopentanoate + tRNA(Glu) + NADP(+) = L-glutamyl-tRNA(Glu) + NADPH + H(+). The protein operates within porphyrin-containing compound metabolism; protoporphyrin-IX biosynthesis; 5-aminolevulinate from L-glutamyl-tRNA(Glu): step 1/2. Catalyzes the NADPH-dependent reduction of glutamyl-tRNA(Glu) to glutamate 1-semialdehyde (GSA). The protein is Glutamyl-tRNA reductase of Pseudomonas putida (strain ATCC 47054 / DSM 6125 / CFBP 8728 / NCIMB 11950 / KT2440).